A 468-amino-acid polypeptide reads, in one-letter code: 3-isopropylmalate dehydratase large subunit (468 aa).

[4Fe-4S] cluster-binding residues include Cys-347, Cys-407, and Cys-410.

This sequence belongs to the aconitase/IPM isomerase family. LeuC type 1 subfamily. Heterodimer of LeuC and LeuD. [4Fe-4S] cluster serves as cofactor.

The catalysed reaction is (2R,3S)-3-isopropylmalate = (2S)-2-isopropylmalate. The protein operates within amino-acid biosynthesis; L-leucine biosynthesis; L-leucine from 3-methyl-2-oxobutanoate: step 2/4. Functionally, catalyzes the isomerization between 2-isopropylmalate and 3-isopropylmalate, via the formation of 2-isopropylmaleate. This is 3-isopropylmalate dehydratase large subunit from Glaesserella parasuis serovar 5 (strain SH0165) (Haemophilus parasuis).